The chain runs to 76 residues: Small ribosomal subunit protein bS18 (76 aa).

This sequence belongs to the bacterial ribosomal protein bS18 family. As to quaternary structure, part of the 30S ribosomal subunit. Forms a tight heterodimer with protein bS6.

Its function is as follows. Binds as a heterodimer with protein bS6 to the central domain of the 16S rRNA, where it helps stabilize the platform of the 30S subunit. The polypeptide is Small ribosomal subunit protein bS18 (Carboxydothermus hydrogenoformans (strain ATCC BAA-161 / DSM 6008 / Z-2901)).